Here is a 226-residue protein sequence, read N- to C-terminus: Urease accessory protein UreF (226 aa).

Belongs to the UreF family. In terms of assembly, ureD, UreF and UreG form a complex that acts as a GTP-hydrolysis-dependent molecular chaperone, activating the urease apoprotein by helping to assemble the nickel containing metallocenter of UreC. The UreE protein probably delivers the nickel.

It localises to the cytoplasm. Its function is as follows. Required for maturation of urease via the functional incorporation of the urease nickel metallocenter. This chain is Urease accessory protein UreF, found in Burkholderia mallei (strain NCTC 10247).